Here is a 122-residue protein sequence, read N- to C-terminus: Large ribosomal subunit protein uL14 (122 aa).

This sequence belongs to the universal ribosomal protein uL14 family. In terms of assembly, part of the 50S ribosomal subunit. Forms a cluster with proteins L3 and L19. In the 70S ribosome, L14 and L19 interact and together make contacts with the 16S rRNA in bridges B5 and B8.

Functionally, binds to 23S rRNA. Forms part of two intersubunit bridges in the 70S ribosome. The sequence is that of Large ribosomal subunit protein uL14 from Orientia tsutsugamushi (strain Ikeda) (Rickettsia tsutsugamushi).